The chain runs to 330 residues: Aspartate--ammonia ligase (330 aa).

This sequence belongs to the class-II aminoacyl-tRNA synthetase family. AsnA subfamily.

It localises to the cytoplasm. It catalyses the reaction L-aspartate + NH4(+) + ATP = L-asparagine + AMP + diphosphate + H(+). It participates in amino-acid biosynthesis; L-asparagine biosynthesis; L-asparagine from L-aspartate (ammonia route): step 1/1. This chain is Aspartate--ammonia ligase, found in Streptococcus pyogenes serotype M6 (strain ATCC BAA-946 / MGAS10394).